Consider the following 292-residue polypeptide: Ventral anterior homeobox 2 (292 aa).

Basic and acidic residues predominate over residues 1 to 36 (MGDGGAERDRGPKRREEPGGRSGCRGEHRGAEDLRA). The interval 1–74 (MGDGGAERDR…DGQQALGETD (74 aa)) is disordered. The span at 38–55 (TGSTSPREIAGTSASSPA) shows a compositional bias: polar residues. Residues 102–161 (PKRTRTSFTAEQLYRLEMEFQRCQYVVGRERTELARQLNLSETQVKVWFQNRRTKQKKDQ) constitute a DNA-binding region (homeobox). A disordered region spans residues 212–241 (AGHRGTSLGDPRNSSQRLNPMPSASASSPL).

Belongs to the EMX homeobox family.

It localises to the nucleus. In terms of biological role, transcription factor that may function in dorsoventral specification of the forebrain. Regulates the expression of Wnt signaling antagonists including the expression of a truncated TCF7L2 isoform that cannot bind CTNNB1 and acts therefore as a potent dominant-negative Wnt antagonist. Plays a crucial role in eye development and, in particular, in the specification of the ventral optic vesicle. May be a regulator of axial polarization in the retina. This is Ventral anterior homeobox 2 (Vax2) from Rattus norvegicus (Rat).